Consider the following 607-residue polypeptide: DNA mismatch repair protein MutL (607 aa).

This sequence belongs to the DNA mismatch repair MutL/HexB family.

Functionally, this protein is involved in the repair of mismatches in DNA. It is required for dam-dependent methyl-directed DNA mismatch repair. May act as a 'molecular matchmaker', a protein that promotes the formation of a stable complex between two or more DNA-binding proteins in an ATP-dependent manner without itself being part of a final effector complex. The protein is DNA mismatch repair protein MutL of Paramagnetospirillum magneticum (strain ATCC 700264 / AMB-1) (Magnetospirillum magneticum).